Reading from the N-terminus, the 130-residue chain is Small ribosomal subunit protein uS11 (130 aa).

This sequence belongs to the universal ribosomal protein uS11 family. Part of the 30S ribosomal subunit. Interacts with proteins S7 and S18. Binds to IF-3.

Its function is as follows. Located on the platform of the 30S subunit, it bridges several disparate RNA helices of the 16S rRNA. Forms part of the Shine-Dalgarno cleft in the 70S ribosome. This is Small ribosomal subunit protein uS11 from Alkalilimnicola ehrlichii (strain ATCC BAA-1101 / DSM 17681 / MLHE-1).